The primary structure comprises 987 residues: Collagen alpha-1(I) chain (987 aa).

Over residues 1–21 (SVPGPMGPSGPRGLPGPPGPG) the composition is skewed to pro residues. Residues 1–987 (SVPGPMGPSG…PGPPGPPGPP (987 aa)) form a disordered region. Residues Pro15, Pro18, Pro20, Pro29, Pro32, Pro35, Pro50, Pro65, Pro71, Pro80, and Pro86 each carry the 4-hydroxyproline modification. Residues 23 to 41 (QGFQGPPGEPGEPGSSGPM) show a composition bias toward low complexity. The span at 53-67 (NGDDGEAGKPGRPGE) shows a compositional bias: basic and acidic residues. A 5-hydroxylysine; alternate modification is found at Lys89. Lys89 is a glycosylation site (O-linked (Gal...) hydroxylysine; alternate). At Ser95 the chain carries Phosphoserine. Low complexity predominate over residues 103–119 (DAGPAGPKGEPGSPGEN). Pro113, Pro116, Pro122, Pro131, Pro137, Pro158, Pro167, Pro170, Pro197, Pro200, Pro212, Pro218, Pro227, Pro233, Pro236, and Pro251 each carry 4-hydroxyproline. Residues 137–155 (PGASGPAGARGNDGAAGAA) show a composition bias toward low complexity. Positions 157-169 (PPGPTGPAGPPGF) are enriched in pro residues. Low complexity predominate over residues 203–253 (AGAAGPAGNPGADGQPGAKGANGAPGIAGAPGFPGARGPSGPQGPSGAPGP). Lys254 is modified (5-hydroxylysine). 4-hydroxyproline is present on residues Pro260, Pro263, Pro275, Pro284, Pro299, Pro305, Pro314, and Pro320. Residues 309–318 (GERGGPGSRG) are compositionally biased toward gly residues. Position 329 is a 5-hydroxylysine (Lys329). 4-hydroxyproline occurs at positions 338, 347, 353, 359, 368, 371, 380, 389, 395, 407, 416, 425, 428, 446, 468, 474, 480, 486, 492, 504, 513, 526, 532, and 541. Residues 362 to 388 (KGLTGSPGSPGPDGKTGPPGPAGQDGR) are compositionally biased toward low complexity. Low complexity predominate over residues 397-416 (ARGQAGVMGFPGPKGAAGEP). Residues 458-483 (QGPAPGFQGLPGPAGPPGEAGKPGEQ) are compositionally biased toward low complexity. Position 553 is a 5-hydroxylysine (Lys553). 4-hydroxyproline is present on residues Pro559, Pro574, and Pro580. Low complexity predominate over residues 586–600 (SGPSGPAGPTGARGA). Ser589 bears the Phosphoserine mark. Residues Pro601, Pro607, Pro610, Pro619, Pro625, Pro643, Pro652, and Pro661 each carry the 4-hydroxyproline modification. Residues 613–640 (AGFAGPPGADGQPGAKGEPGDAGAKGDA) show a composition bias toward low complexity. Over residues 642 to 654 (PPGPAGPTGPPGP) the composition is skewed to pro residues. At Lys664 the chain carries 5-hydroxylysine. Residues 669 to 685 (SAGPPGATGFPGAAGRV) are compositionally biased toward low complexity. 4-hydroxyproline occurs at positions 673 and 679. The residue at position 687 (Pro687) is a 3-hydroxyproline. Residues Pro688, Pro697, Pro700, Pro721, Pro730, Pro738, Pro747, Pro765, Pro774, Pro777, Pro783, Pro798, Pro804, Pro810, Pro819, and Pro825 each carry the 4-hydroxyproline modification. Low complexity predominate over residues 714–723 (ETGPAGRPGE). Positions 735-747 (KGSPGADGPAGAP) are enriched in low complexity. The span at 797–807 (PPGPMGPPGLA) shows a compositional bias: pro residues. The segment covering 809–824 (PPGESGREGSPGAEGS) has biased composition (low complexity). Lys834 carries the post-translational modification 5-hydroxylysine. The span at 843–858 (AGPPGAPGAPGAPGPV) shows a compositional bias: pro residues. A 4-hydroxyproline mark is found at Pro846, Pro849, and Pro852. Over residues 879 to 893 (AGPAGARGPAGPQGP) the composition is skewed to low complexity. The span at 894–905 (RGDKGETGEQGD) shows a compositional bias: basic and acidic residues. At Lys897 the chain carries 5-hydroxylysine. A 4-hydroxyproline mark is found at Pro918, Pro921, Pro939, and Pro954. Low complexity predominate over residues 921 to 954 (PGEQGPSGASGPAGPRGPPGSAGSPGKDGLNGLP). Pro959 carries the post-translational modification 3-hydroxyproline. Pro960 carries the post-translational modification 4-hydroxyproline. Positions 972–987 (VGPPGPPGPPGPPGPP) are enriched in pro residues. Pro974 bears the 3-hydroxyproline mark. Pro975 is modified (4-hydroxyproline). Pro977 is modified (3-hydroxyproline). Pro978 carries the post-translational modification 4-hydroxyproline. Pro980 is modified (3-hydroxyproline). 4-hydroxyproline is present on residues Pro981, Pro984, and Pro987.

The protein belongs to the fibrillar collagen family. As to quaternary structure, trimers of one alpha 2(I) and two alpha 1(I) chains. In terms of processing, contains mostly 4-hydroxyproline. Proline residues at the third position of the tripeptide repeating unit (G-X-Y) are hydroxylated in some or all of the chains. Post-translationally, contains 3-hydroxyproline at a few sites. This modification occurs on the first proline residue in the sequence motif Gly-Pro-Hyp, where Hyp is 4-hydroxyproline. Lysine residues at the third position of the tripeptide repeating unit (G-X-Y) are 5-hydroxylated in some or all of the chains. In terms of processing, O-glycosylated on hydroxylated lysine residues. The O-linked glycan consists of a Glc-Gal disaccharide. In terms of tissue distribution, expressed in bones.

The protein localises to the secreted. Its subcellular location is the extracellular space. It localises to the extracellular matrix. Type I collagen is a member of group I collagen (fibrillar forming collagen). This is Collagen alpha-1(I) chain from Glossotherium robustum (Ground sloth).